The following is a 357-amino-acid chain: uncharacterized protein (357 aa).

The signal sequence occupies residues 1 to 19 (MKRILSFIFIILFFNSSYA).

This is an uncharacterized protein from Rickettsia prowazekii (strain Madrid E).